A 386-amino-acid chain; its full sequence is Protein-glutamate methylesterase/protein-glutamine glutaminase (386 aa).

The region spanning lysine 4–threonine 121 is the Response regulatory domain. Aspartate 55 is modified (4-aspartylphosphate). The disordered stretch occupies residues proline 133 to leucine 161. The 195-residue stretch at isoleucine 190–serine 384 folds into the CheB-type methylesterase domain. Residues serine 202, histidine 229, and aspartate 326 contribute to the active site.

This sequence belongs to the CheB family. Post-translationally, phosphorylated by CheA. Phosphorylation of the N-terminal regulatory domain activates the methylesterase activity.

It is found in the cytoplasm. It catalyses the reaction [protein]-L-glutamate 5-O-methyl ester + H2O = L-glutamyl-[protein] + methanol + H(+). The enzyme catalyses L-glutaminyl-[protein] + H2O = L-glutamyl-[protein] + NH4(+). Its function is as follows. Involved in chemotaxis. Part of a chemotaxis signal transduction system that modulates chemotaxis in response to various stimuli. Catalyzes the demethylation of specific methylglutamate residues introduced into the chemoreceptors (methyl-accepting chemotaxis proteins or MCP) by CheR. Also mediates the irreversible deamidation of specific glutamine residues to glutamic acid. The protein is Protein-glutamate methylesterase/protein-glutamine glutaminase of Idiomarina loihiensis (strain ATCC BAA-735 / DSM 15497 / L2-TR).